Consider the following 63-residue polypeptide: ATP synthase subunit epsilon, mitochondrial (63 aa).

As to quaternary structure, F-type ATP synthases have 2 components, the catalytic core F(1) and the membrane-embedded component F(0), linked together by a central stalk and a peripheral stalk. The central stalk, also called rotor shaft, is often seen as part of F(1). The peripheral stalk is seen as part of F(0). F(0) contains the membrane channel next to the rotor. F-type ATP synthases form dimers but each monomer functions independently in ATP generation. The dimer consists of 18 different polypeptides: ATP1 (subunit alpha, part of F(1), 3 molecules per monomer), ATP2 (subunit beta, part of F(1), 3 molecules per monomer), ATP3 (subunit gamma, part of the central stalk), ATP4 (subunit b, part of the peripheral stalk), ATP5/OSCP (subunit 5/OSCP, part of the peripheral stalk), ATP6 (subunit a, part of the peripheral stalk), ATP7 (subunit d, part of the peripheral stalk), ATP8 (subunit 8, part of the peripheral stalk), OLI1 (subunit c, part of the rotor, 10 molecules per monomer), ATP14 (subunit h, part of the peripheral stalk), ATP15 (subunit epsilon, part of the central stalk), ATP16 (subunit delta, part of the central stalk), ATP17 (subunit f, part of the peripheral stalk), ATP18 (subunit i/j, part of the peripheral stalk). Dimer-specific subunits are ATP19 (subunit k, at interface between monomers), ATP20 (subunit g, at interface between monomers), TIM11 (subunit e, at interface between monomers). Also contains subunit L.

The protein localises to the mitochondrion inner membrane. In terms of biological role, mitochondrial membrane ATP synthase (F(1)F(0) ATP synthase or Complex V) produces ATP from ADP in the presence of a proton gradient across the membrane which is generated by electron transport complexes of the respiratory chain. F-type ATP synthases consist of two structural domains, F(1) - containing the extramembraneous catalytic core, and F(0) - containing the membrane proton channel, linked together by a central stalk and a peripheral stalk. During catalysis, ATP synthesis in the catalytic domain of F(1) is coupled via a rotary mechanism of the central stalk subunits to proton translocation. Part of the complex F(1) domain and the central stalk which is part of the complex rotary element. Rotation of the central stalk against the surrounding alpha/ATP1(3)beta/ATP2(3) subunits leads to hydrolysis of ATP in three separate catalytic sites on the beta/ATP2 subunits. The polypeptide is ATP synthase subunit epsilon, mitochondrial (Pichia angusta (Yeast)).